The chain runs to 675 residues: DNA ligase (675 aa).

NAD(+) is bound by residues 36–40 (DAAYD), 85–86 (SL), and Glu-117. Lys-119 serves as the catalytic N6-AMP-lysine intermediate. Positions 140, 177, 294, and 318 each coordinate NAD(+). Cys-412, Cys-415, Cys-430, and Cys-436 together coordinate Zn(2+). A BRCT domain is found at 597–675 (AEDLPLSGNT…EAEFLELIGE (79 aa)).

The protein belongs to the NAD-dependent DNA ligase family. LigA subfamily. The cofactor is Mg(2+). It depends on Mn(2+) as a cofactor.

The enzyme catalyses NAD(+) + (deoxyribonucleotide)n-3'-hydroxyl + 5'-phospho-(deoxyribonucleotide)m = (deoxyribonucleotide)n+m + AMP + beta-nicotinamide D-nucleotide.. Its function is as follows. DNA ligase that catalyzes the formation of phosphodiester linkages between 5'-phosphoryl and 3'-hydroxyl groups in double-stranded DNA using NAD as a coenzyme and as the energy source for the reaction. It is essential for DNA replication and repair of damaged DNA. This is DNA ligase from Thioalkalivibrio sulfidiphilus (strain HL-EbGR7).